The sequence spans 681 residues: Chaperone protein HtpG (681 aa).

Residues 1 to 326 (MQKGNIGVTT…SPDIPLNVSR (326 aa)) are a; substrate-binding. Positions 327–545 (SYLQSDSNVK…YMRRMKEMAN (219 aa)) are b. The interval 546–681 (IQAGMSFYGE…NFVKRSIELI (136 aa)) is c. The tract at residues 601–620 (DALKKKQEGKKDEDIPTAEK) is disordered.

It belongs to the heat shock protein 90 family. In terms of assembly, homodimer.

It localises to the cytoplasm. Its function is as follows. Molecular chaperone. Has ATPase activity. The chain is Chaperone protein HtpG from Bacteroides fragilis (strain ATCC 25285 / DSM 2151 / CCUG 4856 / JCM 11019 / LMG 10263 / NCTC 9343 / Onslow / VPI 2553 / EN-2).